Reading from the N-terminus, the 118-residue chain is uncharacterized protein (118 aa).

This sequence belongs to the transposase IS3/IS150/IS904 family.

This is an uncharacterized protein from Haemophilus influenzae (strain ATCC 51907 / DSM 11121 / KW20 / Rd).